A 404-amino-acid polypeptide reads, in one-letter code: Argininosuccinate synthase (404 aa).

9–17 (AYSGGLDTS) is a binding site for ATP. Y86 lines the L-citrulline pocket. ATP is bound at residue G116. L-aspartate contacts are provided by T118, N122, and D123. N122 serves as a coordination point for L-citrulline. Positions 126, 174, 183, 259, and 271 each coordinate L-citrulline.

The protein belongs to the argininosuccinate synthase family. Type 1 subfamily. In terms of assembly, homotetramer.

The protein resides in the cytoplasm. The catalysed reaction is L-citrulline + L-aspartate + ATP = 2-(N(omega)-L-arginino)succinate + AMP + diphosphate + H(+). It functions in the pathway amino-acid biosynthesis; L-arginine biosynthesis; L-arginine from L-ornithine and carbamoyl phosphate: step 2/3. This chain is Argininosuccinate synthase, found in Listeria innocua serovar 6a (strain ATCC BAA-680 / CLIP 11262).